The following is a 144-amino-acid chain: Ribosomal RNA large subunit methyltransferase H (144 aa).

Residues Leu-63, Gly-92, and Leu-111 to Phe-116 each bind S-adenosyl-L-methionine.

Belongs to the RNA methyltransferase RlmH family. Homodimer.

It localises to the cytoplasm. It carries out the reaction pseudouridine(1915) in 23S rRNA + S-adenosyl-L-methionine = N(3)-methylpseudouridine(1915) in 23S rRNA + S-adenosyl-L-homocysteine + H(+). Its function is as follows. Specifically methylates the pseudouridine at position 1915 (m3Psi1915) in 23S rRNA. In Synechococcus sp. (strain CC9605), this protein is Ribosomal RNA large subunit methyltransferase H.